A 770-amino-acid polypeptide reads, in one-letter code: Nucleus-vacuole junction protein 2 (770 aa).

Residues 1–5 (MASLK) are Cytoplasmic-facing. Residues 6–26 (VFLAVYLLGGITFLPLVLFTL) traverse the membrane as a helical; Signal-anchor for type II membrane protein segment. Residues 27-770 (YKIHLLYSNL…EFEEQREPKL (744 aa)) lie on the Lumenal side of the membrane. Residues 114 to 266 (TALQEQILQR…WYYQLINASK (153 aa)) enclose the PH domain. Residues N228, N263, N279, N300, N391, N528, and N529 are each glycosylated (N-linked (GlcNAc...) asparagine). An SMP-LTD domain is found at 304–504 (NQLTTKWLNA…YPTPNEVYRG (201 aa)). 3 disordered regions span residues 541–566 (EGGM…LKDL), 578–600 (TQTT…TKSR), and 615–770 (KDNV…EPKL). Residues 554 to 566 (LRPERKKENLKDL) are compositionally biased toward basic and acidic residues. Polar residues predominate over residues 587 to 596 (NDDVSSSENS). 2 N-linked (GlcNAc...) asparagine glycosylation sites follow: N595 and N620. 2 positions are modified to phosphoserine: S640 and S669. Basic and acidic residues predominate over residues 679-688 (LEGRKEKDTE). N700 carries N-linked (GlcNAc...) asparagine glycosylation. 2 stretches are compositionally biased toward polar residues: residues 713–725 (FSVS…NSLK) and 736–751 (LESS…QNRF). The residue at position 717 (S717) is a Phosphoserine. An N-linked (GlcNAc...) asparagine glycan is attached at N718. 2 positions are modified to phosphoserine: S720 and S723. Residues 756 to 770 (FKQDLEFEEQREPKL) show a composition bias toward basic and acidic residues.

It localises to the endoplasmic reticulum membrane. The protein resides in the nucleus membrane. Functionally, during endoplasmic reticulum (ER) stress or when cellular ceramide levels increase, induces contacts between the ER and medial-Golgi complex to facilitate non-vesicular transport of ceramides from the ER to the Golgi complex where they are converted to complex sphingolipids, preventing toxic ceramide accumulation. This is Nucleus-vacuole junction protein 2 from Saccharomyces cerevisiae (strain ATCC 204508 / S288c) (Baker's yeast).